A 679-amino-acid chain; its full sequence is NADPH--cytochrome P450 reductase (679 aa).

The Lumenal segment spans residues 1 to 21 (MASEQTIDGAAAIPSGGGDEP). A helical membrane pass occupies residues 22–42 (FLGLLDVALLAVLIGGAAFYF). Residues 43 to 679 (LRSRKKEEEP…QKRYSADVWS (637 aa)) lie on the Cytoplasmic side of the membrane. Positions 84-228 (LVVFYGSQTG…DFITWKDRFW (145 aa)) constitute a Flavodoxin-like domain. Residues 90–95 (SQTGTG), 142–145 (ATYG), 177–186 (LGNKTYEHYN), and aspartate 212 contribute to the FMN site. An FAD-binding FR-type domain is found at 283-523 (KNPFLAPIKV…FIRKSQFRLP (241 aa)). Arginine 302 provides a ligand contact to NADP(+). FAD contacts are provided by residues 458-461 (RYYS), 476-478 (TAV), tyrosine 482, and 492-495 (GVAT). NADP(+)-binding positions include threonine 537, 597-598 (SR), 603-607 (KVYVQ), and aspartate 640. Tryptophan 678 contacts FAD.

This sequence belongs to the NADPH--cytochrome P450 reductase family. In the N-terminal section; belongs to the flavodoxin family. It in the C-terminal section; belongs to the flavoprotein pyridine nucleotide cytochrome reductase family. As to quaternary structure, interacts with sturkopf. Requires FAD as cofactor. It depends on FMN as a cofactor. As to expression, high in antennae.

It localises to the endoplasmic reticulum membrane. The catalysed reaction is 2 oxidized [cytochrome P450] + NADPH = 2 reduced [cytochrome P450] + NADP(+) + H(+). This enzyme is required for electron transfer from NADP to cytochrome p450 in microsomes. It can also provide electron transfer to heme oxygenase and cytochrome b5. May function to clear the olfactory organ (antennae) from accumulating chemicals. This chain is NADPH--cytochrome P450 reductase (Cpr), found in Drosophila melanogaster (Fruit fly).